The sequence spans 490 residues: MTSKSSPLIFERSREGRYAYSLPKSDIKTNSVESLLDDKFIRKNKAEFPEVAELDLVRHYTELSNKNFGVDNGFYPLGSCTMKYNPKINEKVARIPGFSESHPLQDEDQVQGSLEIIYSLQEELKEITGMDEVTLQPAAGAHGEWTALMIFKAYHENNGEGHRDEVIVPDSAHGTNPASASFAGFKSVTVKSNERGEVDIDDLKRVVNENTAAIMLTNPNTLGIFEKNIMEIREIVHNAGGLLYYDGANLNAIMDKVRPGDMGFDAVHLNLHKTFTGPHGGGGPGSGPVGVVKELASYLPKPMVIKDGDKFKYDNDIKNSIGRVKPFYGNFGIYLRAYTYIRTMGATGLKEVSEAAVLNANYIKARLSEHFEIPYKQYCKHEFVLSGVRQKEFGVRTLDMAKRLLDFGVHPPTIYFPLNVEEGMMIEPTETESKETLDYFIDTLISIAEEAKNDPDKVLEAPHTTVIDRLDEATAARKPILKFENLKQEK.

At Lys273 the chain carries N6-(pyridoxal phosphate)lysine.

The protein belongs to the GcvP family. C-terminal subunit subfamily. As to quaternary structure, the glycine cleavage system is composed of four proteins: P, T, L and H. In this organism, the P 'protein' is a heterodimer of two subunits. Pyridoxal 5'-phosphate is required as a cofactor.

It carries out the reaction N(6)-[(R)-lipoyl]-L-lysyl-[glycine-cleavage complex H protein] + glycine + H(+) = N(6)-[(R)-S(8)-aminomethyldihydrolipoyl]-L-lysyl-[glycine-cleavage complex H protein] + CO2. The glycine cleavage system catalyzes the degradation of glycine. The P protein binds the alpha-amino group of glycine through its pyridoxal phosphate cofactor; CO(2) is released and the remaining methylamine moiety is then transferred to the lipoamide cofactor of the H protein. In Staphylococcus aureus (strain Mu50 / ATCC 700699), this protein is Probable glycine dehydrogenase (decarboxylating) subunit 2.